Here is a 59-residue protein sequence, read N- to C-terminus: Photosystem II reaction center protein K (59 aa).

A propeptide spanning residues 1 to 22 (MLNIFSLIGLNSALYSSSCFFA) is cleaved from the precursor. Residues 30-50 (FLSPIVDFMPVIPLLFFLLAF) form a helical membrane-spanning segment.

Belongs to the PsbK family. PSII is composed of 1 copy each of membrane proteins PsbA, PsbB, PsbC, PsbD, PsbE, PsbF, PsbH, PsbI, PsbJ, PsbK, PsbL, PsbM, PsbT, PsbX, PsbY, PsbZ, Psb30/Ycf12, at least 3 peripheral proteins of the oxygen-evolving complex and a large number of cofactors. It forms dimeric complexes.

It localises to the plastid. The protein resides in the chloroplast thylakoid membrane. Functionally, one of the components of the core complex of photosystem II (PSII). PSII is a light-driven water:plastoquinone oxidoreductase that uses light energy to abstract electrons from H(2)O, generating O(2) and a proton gradient subsequently used for ATP formation. It consists of a core antenna complex that captures photons, and an electron transfer chain that converts photonic excitation into a charge separation. In Silene latifolia (White campion), this protein is Photosystem II reaction center protein K.